The chain runs to 943 residues: Nuclear factor of activated T-cells, cytoplasmic 1 (943 aa).

The tract at residues 22–48 is disordered; the sequence is GRGETLGPAPRAGGTMKSAEEEHYGYA. The segment at 118–123 is calcineurin-binding; that stretch reads PRIEIT. The tract at residues 126–218 is transactivation domain A (TAD-A); that stretch reads LGLYHNNNQF…CVSPKTTDPE (93 aa). The segment at 200 to 298 is disordered; sequence PQTSPWQSPC…GSPRVSVTDD (99 aa). Residues 201-214 show a composition bias toward polar residues; that stretch reads QTSPWQSPCVSPKT. 2 consecutive repeat copies span residues 203-219 and 233-249. A 3 X SP repeats region spans residues 203–298; it reads SPWQSPCVSP…GSPRVSVTDD (96 aa). Residues Ser-233 and Ser-237 each carry the phosphoserine modification. A compositionally biased stretch (polar residues) spans 236–248; the sequence is HSPSTSPRASVTE. Ser-245 is subject to Phosphoserine; by PKA. The Nuclear localization signal motif lies at 265–267; sequence KRK. Phosphoserine; by PKA is present on Ser-269. Residues 276–288 show a composition bias toward pro residues; the sequence is PYSPHHSPTPSPH. The stretch at 282-298 is repeat 3; it reads SPTPSPHGSPRVSVTDD. Ser-294 bears the Phosphoserine; by PKA mark. Residues 310 to 321 carry the Nuclear export signal motif; the sequence is SAIVAAINALTT. An RHD domain is found at 410–592; that stretch reads PTLPALDWQL…NPIECSQRSA (183 aa). Residues 439–446 mediate DNA binding; it reads RAHYETEG. Positions 682–684 match the Nuclear localization signal motif; that stretch reads KRK. The transactivation domain B (TAD-B) stretch occupies residues 703-943; it reads TEPTDDYEPA…NDLSSTSTHS (241 aa). A disordered region spans residues 787–912; that stretch reads HLGLPQPAGE…SPNLAPIPVT (126 aa). The span at 846 to 855 shows a compositional bias: pro residues; that stretch reads SPSPPLPPAT. Residues 924–933 carry the Nuclear export signal motif; sequence YLDDVNEIIR.

Member of the multicomponent NFATC transcription complex that consists of at least two components, a pre-existing cytoplasmic component NFATC2 and an inducible nuclear component NFATC1. Other members such as NFATC4, NFATC3 or members of the activating protein-1 family, MAF, GATA4 and Cbp/p300 can also bind the complex. NFATC proteins bind to DNA as monomers. Interacts with HOMER2 and HOMER3; this interaction may compete with calcineurin/PPP3CA-binding and hence prevent NFATC1 dephosphorylation and activation. Interacts with TLE6/GRG6. In terms of processing, phosphorylated by NFATC-kinase and GSK3B; phosphorylation induces NFATC1 nuclear exit and dephosphorylation by calcineurin promotes nuclear import. Phosphorylation by PKA and DYRK2 negatively modulates nuclear accumulation, and promotes subsequent phosphorylation by GSK3B or casein kinase 1. As to expression, expressed in thymus, peripheral leukocytes as T-cells and spleen. Isoforms A are preferentially expressed in effector T-cells (thymus and peripheral leukocytes) whereas isoforms B and isoforms C are preferentially expressed in naive T-cells (spleen). Isoforms B are expressed in naive T-cells after first antigen exposure and isoforms A are expressed in effector T-cells after second antigen exposure. Isoforms IA are widely expressed but not detected in liver nor pancreas, neural expression is strongest in corpus callosum. Isoforms IB are expressed mostly in muscle, cerebellum, placenta and thymus, neural expression in fetal and adult brain, strongest in corpus callosum.

Its subcellular location is the cytoplasm. The protein localises to the nucleus. Functionally, plays a role in the inducible expression of cytokine genes in T-cells, especially in the induction of the IL-2 or IL-4 gene transcription. Also controls gene expression in embryonic cardiac cells. Could regulate not only the activation and proliferation but also the differentiation and programmed death of T-lymphocytes as well as lymphoid and non-lymphoid cells. Required for osteoclastogenesis and regulates many genes important for osteoclast differentiation and function. This chain is Nuclear factor of activated T-cells, cytoplasmic 1 (NFATC1), found in Homo sapiens (Human).